The following is a 734-amino-acid chain: MVLRFPKFSQSLAQDPTTRRIWFGIATAHDFESHNEITEERLYQNIFASHFGQLAIIFLWTSGNLFHVAWEGNFESWVQDPLHVRPIAHAIWDPHFGQPAVETFTRGGAVDPVNIAYSGVYQWWYTIGLRTKEDLYTGALFLFLISAISLIAGWLHLQPKWKPNIAWFKNAESRLNHHLAGLFGVSSLAWTGHLVHVAIPASRGEYVRWNNLLDQLPHPQGLGPLFTGQWNLYAQNPDSSSHCFGTSQGAGTAILTFLGGFHPETQSLWLTDIAHHHLAITLLFFVAGHMYRTNFGIGHSLKNLLDAHIPPGGRLGRGHQGLYDTLNNSLHFQLGLALASLGVFTSLVAQHMYSLPSYAFIAQDFTTQAALYAHHQYIAGFIMTGAFAHGAIFFIRDYNPEQNKDNVLARILDHKQAIISHLSWVSLFLGFHTLGLYIHNDVMLAFGTPEKQILIEPIFAQWIQSAHGKTSYGFDVLLSSTNGPAVNAGQHLWLPEWLKAVNDTSNSLFLTIGPGDFLVHHAIALGLHTTTLILVKGALDARGSTLMPDKKEFGYSFPCDGPGRGGTCDISAWDAFYLAVFWMLNTIGWVTFYWHWKHLTLWQDNVSQFNESSTYLMGWLRDYLWLNSSQLINGYNPFGMNSLSVWAWMFLFGHLVWATGFMFLISWRGYWQELIETLVWAHERTPLANLIHWRDKPVALSIVQARFVGLAHFSVGYIFTYAAFLIASTSGKFG.

The next 8 membrane-spanning stretches (helical) occupy residues 46 to 69, 135 to 158, 175 to 199, 273 to 291, 330 to 353, 369 to 395, 417 to 439, and 517 to 535; these read IFAS…FHVA, LYTG…LHLQ, LNHH…HVAI, IAHH…GHMY, LHFQ…QHMY, AALY…IFFI, AIIS…LYIH, and FLVH…LILV. [4Fe-4S] cluster is bound by residues C559 and C568. The next 2 helical transmembrane spans lie at 575-596 and 643-665; these read AFYL…YWHW and LSVW…MFLI. Residues H654, M662, and Y670 each coordinate chlorophyll a. W671 is a binding site for phylloquinone. Residues 707–727 traverse the membrane as a helical segment; the sequence is FVGLAHFSVGYIFTYAAFLIA.

This sequence belongs to the PsaA/PsaB family. As to quaternary structure, the PsaA/B heterodimer binds the P700 chlorophyll special pair and subsequent electron acceptors. PSI consists of a core antenna complex that captures photons, and an electron transfer chain that converts photonic excitation into a charge separation. The eukaryotic PSI reaction center is composed of at least 11 subunits. The cofactor is P700 is a chlorophyll a/chlorophyll a' dimer, A0 is one or more chlorophyll a, A1 is one or both phylloquinones and FX is a shared 4Fe-4S iron-sulfur center..

It localises to the plastid membrane. It carries out the reaction reduced [plastocyanin] + hnu + oxidized [2Fe-2S]-[ferredoxin] = oxidized [plastocyanin] + reduced [2Fe-2S]-[ferredoxin]. Its function is as follows. PsaA and PsaB bind P700, the primary electron donor of photosystem I (PSI), as well as the electron acceptors A0, A1 and FX. PSI is a plastocyanin-ferredoxin oxidoreductase, converting photonic excitation into a charge separation, which transfers an electron from the donor P700 chlorophyll pair to the spectroscopically characterized acceptors A0, A1, FX, FA and FB in turn. Oxidized P700 is reduced on the lumenal side of the thylakoid membrane by plastocyanin. This chain is Photosystem I P700 chlorophyll a apoprotein A2, found in Cuscuta sandwichiana (Kauna'oa).